The primary structure comprises 562 residues: NAD-dependent malic enzyme (562 aa).

Y101 (proton donor) is an active-site residue. R154 lines the NAD(+) pocket. K172 functions as the Proton acceptor in the catalytic mechanism. A divalent metal cation contacts are provided by E243, D244, and D267. The NAD(+) site is built by D267 and N415.

Belongs to the malic enzymes family. Homotetramer. Mg(2+) is required as a cofactor. Requires Mn(2+) as cofactor.

It catalyses the reaction (S)-malate + NAD(+) = pyruvate + CO2 + NADH. The enzyme catalyses oxaloacetate + H(+) = pyruvate + CO2. This is NAD-dependent malic enzyme from Vibrio campbellii (strain ATCC BAA-1116).